A 344-amino-acid polypeptide reads, in one-letter code: MTAREGRAPLARCAVVYGVVGLAAIAGVAMWSGAGWHRGTGTAGELPDAAAAGGAAAAPPQAALPASTGLPSSLAGSSAPRLPLDAGGHLAKSRAVRDFFDYCLTAQSDLSAAALDAFVVRQIAAQLDGTVAQAEALDVWHRYRAYLDALAKLRDAGAVDKSDLGALQLALDQRASIAYRTLGDWSQPFFGAEQWRQRYDLARLKIAQDRTLTDAQKAERLAALEQQMPADERAAQQRVDQQRAAIDRIAQLQKSGATPDAMRAQLTQTLGPEAAARVAQMQQDDASWQSRYADYATQRAEIESAGLSPQDRDAQIAALRQRTFTKPGEAVRAASLDRGAGSAQ.

A helical membrane pass occupies residues 14-34 (AVVYGVVGLAAIAGVAMWSGA).

It belongs to the lipase chaperone family.

The protein resides in the cell inner membrane. In terms of biological role, may be involved in the folding of the extracellular lipase during its passage through the periplasm. The chain is Lipase chaperone (lifO) from Burkholderia cepacia (Pseudomonas cepacia).